The chain runs to 157 residues: Small ribosomal subunit protein uS7 (157 aa).

Belongs to the universal ribosomal protein uS7 family. In terms of assembly, part of the 30S ribosomal subunit. Contacts proteins S9 and S11.

One of the primary rRNA binding proteins, it binds directly to 16S rRNA where it nucleates assembly of the head domain of the 30S subunit. Is located at the subunit interface close to the decoding center, probably blocks exit of the E-site tRNA. The chain is Small ribosomal subunit protein uS7 from Psychrobacter cryohalolentis (strain ATCC BAA-1226 / DSM 17306 / VKM B-2378 / K5).